A 292-amino-acid chain; its full sequence is Tetratricopeptide repeat protein 1 (292 aa).

The tract at residues 20–125 (TDPQEAECLH…SSRLKEEGNE (106 aa)) is disordered. 2 stretches are compositionally biased toward basic and acidic residues: residues 36-49 (KEQH…KDVD) and 75-85 (GADKLENKPED). The span at 86 to 98 (DMNPSELDEEYLM) shows a compositional bias: acidic residues. Ser90 is modified (phosphoserine). The span at 99 to 125 (ELEKNMPDEEKKRRREESSRLKEEGNE) shows a compositional bias: basic and acidic residues. TPR repeat units follow at residues 116-149 (SSRL…CPSC), 155-188 (SVLF…NPSY), and 189-222 (IRAI…DPSV).

In terms of assembly, interacts with the GAP domain of NF1. Interacts (via TPR repeats) with HSP90AA1 and HSPA8.

This is Tetratricopeptide repeat protein 1 (TTC1) from Bos taurus (Bovine).